The primary structure comprises 342 residues: AM-toxin biosynthesis protein 12 (342 aa).

The first 20 residues, 1–20 (MSLLITSLAWGALLDPEVSS), serve as a signal peptide directing secretion.

Its pathway is mycotoxin biosynthesis. In terms of biological role, part of the gene clusters that mediate the biosynthesis of AM-toxins, host-selective toxins (HSTs) causing Alternaria blotch on apple, a worldwide distributed disease. AM-toxins are cyclic depsipeptides containing the 3 residues 2-hydroxy-isovaleric acid (2-HIV), dehydroalanine, L-alanine which are common for all 3 AM-toxins I to III. The fourth precursor is L-alpha-amino-methoxyphenyl-valeric acid (L-Amv) for AM-toxin I, L-alpha-amino-phenyl-valeric acid (L-Apv) for AM-toxin II, and L-alpha-amino-hydroxyphenyl-valeric acid (L-Ahv) for AM-toxin III. AM-toxins have two target sites for affecting susceptible apple cells; they cause invagination of the plasma membrane and electrolyte loss and chloroplast disorganization. The non-ribosomal peptide synthetase AMT1 contains 4 catalytic modules and is responsible for activation of each residue in AM-toxin. The aldo-keto reductase AMT2 catalyzes the conversion of 2-keto-isovaleric acid (2-KIV) to 2-hydroxy-isovaleric acid (2-HIV), one of the precursor residues incorporated by AMT1 during AM-toxin biosynthesis, by reduction of its ketone to an alcohol. The cytochrome P450 monooxygenase AMT3 and the thioesterase AMT4 are also important for AM-toxin production, but their exact function within the AM-toxin biosynthesis are not known yet. Up to 21 proteins (including AMT1 to AMT4) are predicted to be involved in AM-toxin biosynthesis since their expression ishighly up-regulated in AM-toxin-producing cultures. This Alternaria alternata (Alternaria rot fungus) protein is AM-toxin biosynthesis protein 12.